We begin with the raw amino-acid sequence, 102 residues long: NADH-quinone oxidoreductase subunit K 1 (102 aa).

A run of 3 helical transmembrane segments spans residues 5 to 25 (LSHY…GIFL), 31 to 51 (IVIL…MVAF), and 65 to 85 (LFIL…LVVF).

The protein belongs to the complex I subunit 4L family. In terms of assembly, NDH-1 is composed of 14 different subunits. Subunits NuoA, H, J, K, L, M, N constitute the membrane sector of the complex.

It localises to the cell inner membrane. It catalyses the reaction a quinone + NADH + 5 H(+)(in) = a quinol + NAD(+) + 4 H(+)(out). Its function is as follows. NDH-1 shuttles electrons from NADH, via FMN and iron-sulfur (Fe-S) centers, to quinones in the respiratory chain. The immediate electron acceptor for the enzyme in this species is believed to be ubiquinone. Couples the redox reaction to proton translocation (for every two electrons transferred, four hydrogen ions are translocated across the cytoplasmic membrane), and thus conserves the redox energy in a proton gradient. This chain is NADH-quinone oxidoreductase subunit K 1, found in Rhizobium etli (strain ATCC 51251 / DSM 11541 / JCM 21823 / NBRC 15573 / CFN 42).